Here is a 281-residue protein sequence, read N- to C-terminus: Probable endonuclease 4 (281 aa).

Positions 69, 109, 145, 179, 182, 216, 229, 231, and 261 each coordinate Zn(2+).

This sequence belongs to the AP endonuclease 2 family. Zn(2+) serves as cofactor.

The catalysed reaction is Endonucleolytic cleavage to 5'-phosphooligonucleotide end-products.. In terms of biological role, endonuclease IV plays a role in DNA repair. It cleaves phosphodiester bonds at apurinic or apyrimidinic (AP) sites, generating a 3'-hydroxyl group and a 5'-terminal sugar phosphate. The chain is Probable endonuclease 4 from Pectobacterium atrosepticum (strain SCRI 1043 / ATCC BAA-672) (Erwinia carotovora subsp. atroseptica).